The chain runs to 226 residues: Movement and silencing protein TGBp1 (226 aa).

The (+)RNA virus helicase ATP-binding domain occupies 1–138; that stretch reads MDILIISLKS…IASCGFDFET (138 aa). Positions 139 to 226 constitute a (+)RNA virus helicase C-terminal domain; the sequence is NSQEEGHLEI…KGLTYVRAGA (88 aa).

This sequence belongs to the Tymovirales TGBp1 protein family. As to quaternary structure, homodimer and homooligomer. Interacts with capsid protein. Interacts with host AGO1; this interaction targets the host protein for degradation, thereby suppressing the antiviral RNA silencing.

The protein resides in the host cytoplasm. In terms of biological role, transports viral genome to neighboring plant cells directly through plasmosdesmata, without any budding. The movement protein allows efficient cell to cell propagation, by bypassing the host cell wall barrier. Increases plasmodesma size exclusion limit. Acts as a suppressor of RNA-mediated gene silencing, also known as post-transcriptional gene silencing (PTGS), a mechanism of plant viral defense that limits the accumulation of viral RNAs. This is Movement and silencing protein TGBp1 from Brassica campestris (Field mustard).